A 415-amino-acid chain; its full sequence is Multidrug resistance protein MdtA (415 aa).

The first 21 residues, 1 to 21 (MKGSYKSRWVIVIVVVIAAIA), serve as a signal peptide directing secretion. The segment covering 31 to 47 (DSQSAAPGATKQAQQSP) has biased composition (polar residues). 2 disordered regions span residues 31–60 (DSQS…GPLA) and 392–415 (EAQS…GARS). Residues 399 to 415 (PEEKATSREYAKKGARS) are compositionally biased toward basic and acidic residues.

It belongs to the membrane fusion protein (MFP) (TC 8.A.1) family. In terms of assembly, part of a tripartite efflux system composed of MdtA, MdtB and MdtC.

The protein localises to the cell inner membrane. Functionally, the MdtABC tripartite complex confers resistance against novobiocin and deoxycholate. The polypeptide is Multidrug resistance protein MdtA (Escherichia coli O8 (strain IAI1)).